A 309-amino-acid polypeptide reads, in one-letter code: MKKGVILINLGGPDSLEAVEPFLYNLFSDPDIFSLPFQKVLAKIIAKLRAKKTRHYYELMGGKSPQYEQTLEQAKALQERLGEDYKVVVGMRYWKPYIKDALSELLKEGINEVILLPLYPQYSKTTTGSAFNEFERSKKALKADHIKVKKIEHFYDHPLYIKAWAEQIKQSVEKPEEYHFLFSAHSLPKKLIEEGDPYQEQTEKTVKLIMENFPEVEYTLAYQSKVGFGKWLEPSTDEVIRNLIKKEVKKLLVIPISFVSEHSETLYELDKQYRELAQELGYEEFVRVPTLRTNPYFISALEDLVKNEV.

Residues His-185 and Glu-264 each contribute to the Fe cation site.

The protein belongs to the ferrochelatase family.

It is found in the cytoplasm. It carries out the reaction heme b + 2 H(+) = protoporphyrin IX + Fe(2+). It participates in porphyrin-containing compound metabolism; protoheme biosynthesis; protoheme from protoporphyrin-IX: step 1/1. In terms of biological role, catalyzes the ferrous insertion into protoporphyrin IX. This Aquifex aeolicus (strain VF5) protein is Ferrochelatase.